A 390-amino-acid chain; its full sequence is Queuine tRNA-ribosyltransferase (390 aa).

D92 acts as the Proton acceptor in catalysis. Residues 92 to 96, D146, Q195, and G222 each bind substrate; that span reads DSGGF. The interval 253–259 is RNA binding; that stretch reads GVGTPED. The active-site Nucleophile is the D272. Residues 277–281 are RNA binding; important for wobble base 34 recognition; that stretch reads TRNAR. Residues C310, C312, C315, and H354 each contribute to the Zn(2+) site.

It belongs to the queuine tRNA-ribosyltransferase family. In terms of assembly, homodimer. Within each dimer, one monomer is responsible for RNA recognition and catalysis, while the other monomer binds to the replacement base PreQ1. It depends on Zn(2+) as a cofactor.

The enzyme catalyses 7-aminomethyl-7-carbaguanine + guanosine(34) in tRNA = 7-aminomethyl-7-carbaguanosine(34) in tRNA + guanine. The protein operates within tRNA modification; tRNA-queuosine biosynthesis. Functionally, catalyzes the base-exchange of a guanine (G) residue with the queuine precursor 7-aminomethyl-7-deazaguanine (PreQ1) at position 34 (anticodon wobble position) in tRNAs with GU(N) anticodons (tRNA-Asp, -Asn, -His and -Tyr). Catalysis occurs through a double-displacement mechanism. The nucleophile active site attacks the C1' of nucleotide 34 to detach the guanine base from the RNA, forming a covalent enzyme-RNA intermediate. The proton acceptor active site deprotonates the incoming PreQ1, allowing a nucleophilic attack on the C1' of the ribose to form the product. After dissociation, two additional enzymatic reactions on the tRNA convert PreQ1 to queuine (Q), resulting in the hypermodified nucleoside queuosine (7-(((4,5-cis-dihydroxy-2-cyclopenten-1-yl)amino)methyl)-7-deazaguanosine). This is Queuine tRNA-ribosyltransferase from Paracidovorax citrulli (strain AAC00-1) (Acidovorax citrulli).